A 24-amino-acid polypeptide reads, in one-letter code: Alpha-lactalbumin (24 aa).

This sequence belongs to the glycosyl hydrolase 22 family. Lactose synthase (LS) is a heterodimer of a catalytic component, beta1,4-galactosyltransferase (beta4Gal-T1) and a regulatory component, alpha-lactalbumin (LA). In terms of processing, glycosylated (50% of the proteins). In terms of tissue distribution, mammary gland specific. Secreted in milk.

The protein localises to the secreted. Its function is as follows. Regulatory subunit of lactose synthase, changes the substrate specificity of galactosyltransferase in the mammary gland making glucose a good acceptor substrate for this enzyme. This enables LS to synthesize lactose, the major carbohydrate component of milk. In other tissues, galactosyltransferase transfers galactose onto the N-acetylglucosamine of the oligosaccharide chains in glycoproteins. The polypeptide is Alpha-lactalbumin (LALBA) (Felis catus (Cat)).